Here is a 619-residue protein sequence, read N- to C-terminus: Guanylate cyclase soluble subunit beta-1 (619 aa).

Residue His-105 coordinates heme. The 134-residue stretch at 421–554 folds into the Guanylate cyclase domain; the sequence is TILFSGIVGF…NTVNLTSRTE (134 aa).

The protein belongs to the adenylyl cyclase class-4/guanylyl cyclase family. As to quaternary structure, the active enzyme is formed by a heterodimer of an alpha and a beta subunit. Heterodimer with GUCY1A1. Can also form inactive homodimers in vitro. Heme is required as a cofactor. In terms of tissue distribution, lung and brain.

It is found in the cytoplasm. The enzyme catalyses GTP = 3',5'-cyclic GMP + diphosphate. Activated by nitric oxide in the presence of magnesium or manganese ions, binding of NO to the heme iron increases catalytic activity up to 400 folds. In terms of biological role, mediates responses to nitric oxide (NO) by catalyzing the biosynthesis of the signaling molecule cGMP. In Bos taurus (Bovine), this protein is Guanylate cyclase soluble subunit beta-1 (GUCY1B1).